We begin with the raw amino-acid sequence, 262 residues long: Putative hydroxypyruvate isomerase (262 aa).

Residues E146 and E244 each act as proton donor/acceptor in the active site.

Belongs to the hyi family.

It catalyses the reaction 3-hydroxypyruvate = 2-hydroxy-3-oxopropanoate. In terms of biological role, catalyzes the reversible isomerization between hydroxypyruvate and 2-hydroxy-3-oxopropanoate (also termed tartronate semialdehyde). The protein is Putative hydroxypyruvate isomerase of Caenorhabditis elegans.